The following is a 937-amino-acid chain: Hyphally-regulated protein (937 aa).

The first 20 residues, 1–20 (MKVVSNFIFTILLTLNLSAA), serve as a signal peptide directing secretion. A glycan (N-linked (GlcNAc...) asparagine) is linked at Asn-16. A helical transmembrane segment spans residues 42-62 (VHSGATWAILGTTLCSFFGGL). Asn-236 carries N-linked (GlcNAc...) asparagine glycosylation. Positions 332–483 (SAPESESDLN…QSITSSPGQS (152 aa)) are disordered. Residues 344–392 (TTSSIETSSYSSAATESSVVSESSSAVDSLTSSSLSSKSESSDVVSSTT) show a composition bias toward low complexity. The segment covering 393-414 (NIESSSTAIETTMNSESSTDAG) has biased composition (polar residues). Residues 415 to 475 (SSSISQSESS…SNALSSTEQS (61 aa)) are compositionally biased toward low complexity. N-linked (GlcNAc...) asparagine glycans are attached at residues Asn-449, Asn-488, Asn-580, Asn-585, Asn-595, and Asn-603. A compositionally biased stretch (low complexity) spans 567–590 (DATTTTTTSTGGDNSTGGNESGSN). A disordered region spans residues 567-857 (DATTTTTTST…VANPVTTSTE (291 aa)). The span at 591–609 (HGPGNGSTEGSGNGSGAGS) shows a compositional bias: gly residues. Repeat unit 1 spans residues 610–613 (NEGS). The tract at residues 610 to 753 (NEGSQSGPNN…GAGNGSNEGS (144 aa)) is 7 X 4 AA repeats of N-E-G-S. 4 N-linked (GlcNAc...) asparagine glycosylation sites follow: Asn-619, Asn-631, Asn-641, and Asn-649. Composition is skewed to gly residues over residues 619-631 (NGSGSGSEGGSNN) and 641-665 (NGSGSGSNNGSGSGSTEGSEGGSGS). Repeat copies occupy residues 666–669 (NEGS), 680–683 (NEGS), 690–693 (NEGS), and 698–701 (NEGS). The segment covering 666-682 (NEGSQSGSGSQPGPNEG) has biased composition (low complexity). Positions 699-725 (EGSGSGSGSGSNNGSGSGSQSGSGSGS) are enriched in gly residues. An N-linked (GlcNAc...) asparagine glycan is attached at Asn-711. Over residues 726–742 (QSGSESGSNSGSNEGSN) the composition is skewed to low complexity. The stretch at 738 to 741 (NEGS) is repeat 6. Positions 743–801 (PGAGNGSNEGSGQGSGNGSEAGSGQGSGPNNGSGSGHNDGSGSGSNQGSNPGAGSGSGS) are enriched in gly residues. Asn-747 carries N-linked (GlcNAc...) asparagine glycosylation. Repeat 7 spans residues 750–753 (NEGS). 2 N-linked (GlcNAc...) asparagine glycosylation sites follow: Asn-759 and Asn-773. Residues 802 to 814 (ESGSKAGSHSGSN) are compositionally biased toward low complexity. Residues 817-829 (AKTDSIEGFHTES) show a composition bias toward basic and acidic residues. Polar residues predominate over residues 841–851 (ATVTGNSVANP). Residues Asn-897 and Asn-913 are each glycosylated (N-linked (GlcNAc...) asparagine). The GPI-anchor amidated asparagine moiety is linked to residue Asn-913. Positions 914–937 (GSSIVTGGKSILFGLIVSMVVLFM) are cleaved as a propeptide — removed in mature form.

It localises to the cell membrane. Its subcellular location is the secreted. The protein resides in the cell wall. Functionally, nonessential component of the hyphal cell wall. The chain is Hyphally-regulated protein (HYR1) from Candida albicans (Yeast).